We begin with the raw amino-acid sequence, 1153 residues long: Error-prone DNA polymerase (1153 aa).

2 disordered regions span residues 1–39 (MFYS…QAQP) and 64–89 (VGEG…GASQ).

This sequence belongs to the DNA polymerase type-C family. DnaE2 subfamily.

Its subcellular location is the cytoplasm. The enzyme catalyses DNA(n) + a 2'-deoxyribonucleoside 5'-triphosphate = DNA(n+1) + diphosphate. Functionally, DNA polymerase involved in damage-induced mutagenesis and translesion synthesis (TLS). It is not the major replicative DNA polymerase. In Corynebacterium jeikeium (strain K411), this protein is Error-prone DNA polymerase.